The primary structure comprises 432 residues: Adenylosuccinate synthetase (432 aa).

GTP-binding positions include 13–19 (GDEGKGK) and 41–43 (GHT). The Proton acceptor role is filled by D14. Mg(2+) contacts are provided by D14 and G41. Residues 14 to 17 (DEGK), 39 to 42 (NAGH), T130, R144, Q225, T240, and R304 contribute to the IMP site. The active-site Proton donor is H42. 300-306 (AVTGRPR) contributes to the substrate binding site. Residues R306, 332–334 (KLD), and 415–417 (STG) each bind GTP.

It belongs to the adenylosuccinate synthetase family. In terms of assembly, homodimer. The cofactor is Mg(2+).

The protein resides in the cytoplasm. The catalysed reaction is IMP + L-aspartate + GTP = N(6)-(1,2-dicarboxyethyl)-AMP + GDP + phosphate + 2 H(+). It functions in the pathway purine metabolism; AMP biosynthesis via de novo pathway; AMP from IMP: step 1/2. In terms of biological role, plays an important role in the de novo pathway of purine nucleotide biosynthesis. Catalyzes the first committed step in the biosynthesis of AMP from IMP. In Actinobacillus pleuropneumoniae serotype 3 (strain JL03), this protein is Adenylosuccinate synthetase.